Reading from the N-terminus, the 863-residue chain is Aminopeptidase N (863 aa).

Residues E124 and 263-267 contribute to the substrate site; that span reads GAMEN. H299 is a binding site for Zn(2+). E300 (proton acceptor) is an active-site residue. The Zn(2+) site is built by H303 and E322.

The protein belongs to the peptidase M1 family. It depends on Zn(2+) as a cofactor.

The enzyme catalyses Release of an N-terminal amino acid, Xaa-|-Yaa- from a peptide, amide or arylamide. Xaa is preferably Ala, but may be most amino acids including Pro (slow action). When a terminal hydrophobic residue is followed by a prolyl residue, the two may be released as an intact Xaa-Pro dipeptide.. Aminopeptidase N is involved in the degradation of intracellular peptides generated by protein breakdown during normal growth as well as in response to nutrient starvation. In Caulobacter vibrioides (strain ATCC 19089 / CIP 103742 / CB 15) (Caulobacter crescentus), this protein is Aminopeptidase N (pepN).